We begin with the raw amino-acid sequence, 359 residues long: Short chain dehydrogenase resG (359 aa).

5 residues coordinate NADP(+): K87, D110, N137, Y237, and K241. The active-site Proton donor is the Y237. K241 (lowers pKa of active site Tyr) is an active-site residue.

It belongs to the short-chain dehydrogenases/reductases (SDR) family.

It participates in antifungal biosynthesis. Its function is as follows. Short chain dehydrogenase; part of the gene cluster that mediates the biosynthesis of the tetrahydropyranyl antifungal agent restricticin that acts as an inhibitor of CYP51 and blocks the ergosterol biosynthesis. The highly reducing polyketide synthase resH, the short chain dehydrogenase resG, the cyclase resF, the FAD-dependent monooxygenase resA and the enoylreductase resD are required to generate the first stable intermediate desmethylrestrictinol. ResH with resD biosynthesize the first polyketide chain intermediate that is reduced by resG, followed by epoxidation by resA before 6-endo cyclization via epoxide opening by resF leads to desmethylrestrictinol. The methyltransferase resE then catalyzes the C4 O-methylation of desmethylrestrictinol to produce restrictinol, and the nonribosomal peptide synthetase resC catalyzes the C3 esterification of restrictinol with glycine that leads to restricticin. This is Short chain dehydrogenase resG from Aspergillus sclerotiorum.